The chain runs to 268 residues: Speedy protein E4A (268 aa).

Disordered regions lie at residues Met-1–Val-26 and Leu-43–Glu-97. Residues Leu-43–Pro-52 are compositionally biased toward polar residues. Positions Pro-134 to Thr-265 are speedy/Ringo box; Required for CDK-binding.

Belongs to the Speedy/Ringo family. Interacts with CDK1. Does not interact with CDK2 in vivo. As to expression, testis-specific.

The protein localises to the nucleus. Promotes progression through the cell cycle via binding and activation of CDK1. The protein is Speedy protein E4A of Mus musculus (Mouse).